We begin with the raw amino-acid sequence, 504 residues long: MASKLTPLTLLLLLLAGDRAFSDSEVTSHSSQDPLVVQEGSRDSVPERDGSRSPIEHTGQSSTWPTTSGSTKISNDTMDQVANESFIQHVQPAAQLPEDSPSQSPVNSSSPPSTASAPPTQAPTEPLCPEPLAWCSDSDRDSSEATLSEALTDFSVKLYHAFSATKKAETNMAFSPFSIASLLTQVLLGAGDSTKSNLEDILSYPKDFACVHQTLKAFSSKGVTSVSQIFHSPDLAIRDTYVNASLSLYGSSPRVLGPDGDANLKLINTWVAENTNHKINELLDSLPSDTRLVLLNAVYLSAKWKKTFEQKKMMASFLYKNSMIKVPMLSSKKYPLALFNDQTLKAKVGQLQLSHNLSFVIMVPQSPTHQLEDMEKALNPTVFKAILKKLELSKFQPTYVMMPRIKVKSSQDMLSIMEKLEFFDFTYDLNLCGLTEDPDLQVSSMKHETVLELTETGVEAAAASTISVARNLLIFEVQQPFLFLLWDQRHKFPVFMGRVYDPRA.

An N-terminal signal peptide occupies residues 1 to 22; it reads MASKLTPLTLLLLLLAGDRAFS. The disordered stretch occupies residues 23 to 75; sequence DSEVTSHSSQDPLVVQEGSRDSVPERDGSRSPIEHTGQSSTWPTTSGSTKISN. A compositionally biased stretch (polar residues) spans 24-33; that stretch reads SEVTSHSSQD. The segment covering 40–55 has biased composition (basic and acidic residues); it reads GSRDSVPERDGSRSPI. Over residues 58–75 the composition is skewed to polar residues; it reads TGQSSTWPTTSGSTKISN. Residues Asn75, Asn83, Asn107, Asn243, and Asn356 are each glycosylated (N-linked (GlcNAc...) asparagine). The disordered stretch occupies residues 94-132; the sequence is AQLPEDSPSQSPVNSSSPPSTASAPPTQAPTEPLCPEPL. The span at 100–125 shows a compositional bias: low complexity; sequence SPSQSPVNSSSPPSTASAPPTQAPTE.

Belongs to the serpin family. In terms of assembly, interacts with MASP1.

It is found in the secreted. Serine protease inhibitor, which acrs as a regulator of the classical complement pathway. Forms a proteolytically inactive stoichiometric complex with the C1r or C1s proteases. May also regulate blood coagulation, fibrinolysis and the generation of kinins. Very efficient inhibitor of FXIIa. Inhibits chymotrypsin and kallikrein. This Rattus norvegicus (Rat) protein is Plasma protease C1 inhibitor (Serping1).